Consider the following 432-residue polypeptide: UDP-glucosyltransferase B1 (432 aa).

Belongs to the UDP-glycosyltransferase family.

The catalysed reaction is (9Z)-17-hydroxyoctadec-9-enoate 17-O-beta-D-glucoside + UDP-alpha-D-glucose = (9Z)-17-hydroxyoctadec-9-enoate 17-O-sophoroside + UDP + H(+). In terms of biological role, catalyzes the second glycosylation step of sophorolipid biosynthesis, the further glucosylation of the previoulsy formed glucolipid to give rise to an acidic sophorolipid. This is UDP-glucosyltransferase B1 from Starmerella bombicola (Yeast).